We begin with the raw amino-acid sequence, 359 residues long: Medium-wave-sensitive opsin 1 (359 aa).

Over 1–47 the chain is Extracellular; the sequence is MAQQLTGEQTLDHYEDSTQASIFTYTNSNSTRGPFEGPNYHIAPRWV. The segment at 12 to 38 is required for 11-cis-retinal regeneration; sequence DHYEDSTQASIFTYTNSNSTRGPFEGP. The N-linked (GlcNAc...) asparagine glycan is linked to Asn-29. Residues 48 to 72 traverse the membrane as a helical segment; that stretch reads YHLTSTWMILVVIASVFTNGLVLAA. Over 73-84 the chain is Cytoplasmic; sequence TMRFKKLRHPLN. Residues 85-110 form a helical membrane-spanning segment; that stretch reads WILVNLAVADLAETIIASTISVVNQI. The Extracellular segment spans residues 111–124; it reads YGYFVLGHPLCVIE. An intrachain disulfide couples Cys-121 to Cys-198. Residues 125–144 form a helical membrane-spanning segment; the sequence is GYIVSLCGITGLWSLAIISW. At 145–163 the chain is on the cytoplasmic side; that stretch reads ERWLVVCKPFGNVRFDAKL. The helical transmembrane segment at 164-187 threads the bilayer; it reads ATVGIVFSWVWAAVWTAPPIFGWS. Residues 188-213 are Extracellular-facing; sequence RYWPYGLKTSCGPDVFSGTSYPGVQS. Residues 214-241 form a helical membrane-spanning segment; it reads YMMVLMVTCCIFPLSIIVLCYLQVWLAI. At 242–263 the chain is on the cytoplasmic side; it reads RAVAKQQKESESTQKAEKEVTR. The helical transmembrane segment at 264 to 287 threads the bilayer; the sequence is MVVVMVFAYCLCWGPYTFFACFAT. At 288–295 the chain is on the extracellular side; sequence AHPGYAFH. A helical membrane pass occupies residues 296–320; that stretch reads PLVASLPSYFAKSATIYNPIIYVFM. Position 307 is an N6-(retinylidene)lysine (Lys-307). Residues 321–359 lie on the Cytoplasmic side of the membrane; it reads NRQFRNCILQLFGKKVDDSSELSSTSKTEVSSVSSVSPA.

It belongs to the G-protein coupled receptor 1 family. Opsin subfamily. In terms of assembly, monomer. Homodimer. Homotetramer. Post-translationally, O-glycosylated. In terms of processing, phosphorylated on some or all of the serine and threonine residues present in the C-terminal region. Expressed in cone photoreceptor cells.

The protein localises to the membrane. In terms of biological role, visual pigments are the light-absorbing molecules that mediate vision. They consist of an apoprotein, opsin, covalently linked to cis-retinal. May increase spectral sensitivity in dim light. The polypeptide is Medium-wave-sensitive opsin 1 (Opn1mw) (Rattus norvegicus (Rat)).